Here is a 718-residue protein sequence, read N- to C-terminus: Catalase-peroxidase (718 aa).

Positions 1–24 (MDQKSDNAGKCPVAHTVPKGRSNR) are disordered. The segment at residues 95-217 (WHSAGTYRIT…LAAVQMGLIY (123 aa)) is a cross-link (tryptophyl-tyrosyl-methioninium (Trp-Tyr) (with M-243)). Catalysis depends on histidine 96, which acts as the Proton acceptor. The tryptophyl-tyrosyl-methioninium (Tyr-Met) (with W-95) cross-link spans 217–243 (YVNPEGPNGNPDPVAAAREIRETFARM). A heme b-binding site is contributed by histidine 258.

This sequence belongs to the peroxidase family. Peroxidase/catalase subfamily. As to quaternary structure, homodimer or homotetramer. The cofactor is heme b. In terms of processing, formation of the three residue Trp-Tyr-Met cross-link is important for the catalase, but not the peroxidase activity of the enzyme.

The catalysed reaction is H2O2 + AH2 = A + 2 H2O. The enzyme catalyses 2 H2O2 = O2 + 2 H2O. Its function is as follows. Bifunctional enzyme with both catalase and broad-spectrum peroxidase activity. The chain is Catalase-peroxidase from Sinorhizobium fredii (strain NBRC 101917 / NGR234).